Here is a 309-residue protein sequence, read N- to C-terminus: Olfactory receptor 8A1 (309 aa).

Residues 1–28 (MTAENQSTVTEFILGGLTNRPELQLPLF) lie on the Extracellular side of the membrane. The helical transmembrane segment at 29 to 49 (LLFLGIYVVTMVGNLGMITLI) threads the bilayer. Residues 50–56 (GLNSQLH) lie on the Cytoplasmic side of the membrane. Residues 57–77 (TPMYFFLSNLSLVDLCYSSVI) traverse the membrane as a helical segment. The Extracellular portion of the chain corresponds to 78-90 (TPKMLINFVSQRN). The chain crosses the membrane as a helical span at residues 91 to 111 (LISYVGCMSQLYFFLVFVIAE). An intrachain disulfide couples cysteine 97 to cysteine 188. Residues 112-133 (CYMLTVMAYDRYVAICQPLLYN) lie on the Cytoplasmic side of the membrane. A helical transmembrane segment spans residues 134–154 (IIMSPALCSLLVAFVYAVGLI). Over 155–195 (GSAIETGLMLKLNYCEDLISHYFCDILPLMKLSCSSTYDVE) the chain is Extracellular. Residues 196 to 216 (MAVFFLAGFDIIVTSLTVLIS) form a helical membrane-spanning segment. The Cytoplasmic portion of the chain corresponds to 217 to 238 (YAFILSSILRISSNEGRSKAFS). Residues 239-259 (TCSSHFAAVGLFYGSTAFMYL) form a helical membrane-spanning segment. Over 260-270 (KPSTASSLAQE) the chain is Extracellular. Residues 271 to 291 (NVASVFYTTVIPMFNPLIYSL) traverse the membrane as a helical segment. At 292–309 (RNKEVKTALDKTLRRKVF) the chain is on the cytoplasmic side.

It belongs to the G-protein coupled receptor 1 family.

Its subcellular location is the cell membrane. Odorant receptor. This Mus musculus (Mouse) protein is Olfactory receptor 8A1.